A 300-amino-acid chain; its full sequence is Protoheme IX farnesyltransferase 1 (300 aa).

The next 9 helical transmembrane spans lie at 28–48 (VVAL…PTIL), 54–74 (VAGL…NHLI), 100–120 (ALLF…VFTN), 122–142 (LTAW…TAYL), 149–169 (NIVI…TAVT), 176–196 (ALLL…ALAI), 222–242 (CILL…LVGM), 243–263 (SGPL…YKAW), and 280–300 (FSIY…YLWA).

The protein belongs to the UbiA prenyltransferase family. Protoheme IX farnesyltransferase subfamily.

The protein resides in the cell inner membrane. The enzyme catalyses heme b + (2E,6E)-farnesyl diphosphate + H2O = Fe(II)-heme o + diphosphate. Its pathway is porphyrin-containing compound metabolism; heme O biosynthesis; heme O from protoheme: step 1/1. Converts heme B (protoheme IX) to heme O by substitution of the vinyl group on carbon 2 of heme B porphyrin ring with a hydroxyethyl farnesyl side group. In Shewanella sp. (strain MR-4), this protein is Protoheme IX farnesyltransferase 1.